The following is a 337-amino-acid chain: Glycerol-3-phosphate dehydrogenase [NAD(P)+] (337 aa).

NADPH contacts are provided by Trp-11, Arg-30, and Lys-113. Residues Lys-113, Gly-141, and Ser-143 each coordinate sn-glycerol 3-phosphate. Position 145 (Ala-145) interacts with NADPH. Sn-glycerol 3-phosphate-binding residues include Lys-196, Asp-249, Ser-259, Arg-260, and Asn-261. Residue Lys-196 is the Proton acceptor of the active site. NADPH is bound at residue Arg-260. The NADPH site is built by Val-284 and Glu-286.

The protein belongs to the NAD-dependent glycerol-3-phosphate dehydrogenase family.

It localises to the cytoplasm. It catalyses the reaction sn-glycerol 3-phosphate + NAD(+) = dihydroxyacetone phosphate + NADH + H(+). The catalysed reaction is sn-glycerol 3-phosphate + NADP(+) = dihydroxyacetone phosphate + NADPH + H(+). It functions in the pathway membrane lipid metabolism; glycerophospholipid metabolism. Functionally, catalyzes the reduction of the glycolytic intermediate dihydroxyacetone phosphate (DHAP) to sn-glycerol 3-phosphate (G3P), the key precursor for phospholipid synthesis. The polypeptide is Glycerol-3-phosphate dehydrogenase [NAD(P)+] (Leptothrix cholodnii (strain ATCC 51168 / LMG 8142 / SP-6) (Leptothrix discophora (strain SP-6))).